A 197-amino-acid polypeptide reads, in one-letter code: Pyridoxal 5'-phosphate synthase subunit PdxT (197 aa).

53–55 (GES) contacts L-glutamine. The active-site Nucleophile is the Cys85. L-glutamine is bound by residues Arg114 and 142–143 (IR). Active-site charge relay system residues include His179 and Glu181.

This sequence belongs to the glutaminase PdxT/SNO family. In terms of assembly, in the presence of PdxS, forms a dodecamer of heterodimers. Only shows activity in the heterodimer.

It carries out the reaction aldehydo-D-ribose 5-phosphate + D-glyceraldehyde 3-phosphate + L-glutamine = pyridoxal 5'-phosphate + L-glutamate + phosphate + 3 H2O + H(+). The enzyme catalyses L-glutamine + H2O = L-glutamate + NH4(+). Its pathway is cofactor biosynthesis; pyridoxal 5'-phosphate biosynthesis. In terms of biological role, catalyzes the hydrolysis of glutamine to glutamate and ammonia as part of the biosynthesis of pyridoxal 5'-phosphate. The resulting ammonia molecule is channeled to the active site of PdxS. This Pyrococcus furiosus (strain ATCC 43587 / DSM 3638 / JCM 8422 / Vc1) protein is Pyridoxal 5'-phosphate synthase subunit PdxT.